Here is a 378-residue protein sequence, read N- to C-terminus: uncharacterized protein (378 aa).

The span at 1–11 (MSPMNRQRKNK) shows a compositional bias: basic residues. The segment at 1 to 23 (MSPMNRQRKNKSNVLNEKDERPG) is disordered.

This is an uncharacterized protein from Caenorhabditis elegans.